The sequence spans 823 residues: Protein Shroom1 (823 aa).

Position 1 is an N-acetylmethionine (Met-1). Disordered stretches follow at residues 1–55 (MEAL…TERL), 72–110 (PTSK…LNRQ), and 124–159 (ATAH…TSFQ). Composition is skewed to polar residues over residues 28 to 50 (RADS…TPSP) and 72 to 85 (PTSK…TQRP). Residues Ser-103, Ser-133, Ser-137, Ser-166, Ser-190, and Ser-224 each carry the phosphoserine modification. The region spanning 145–233 (LQGAQRRVLR…SEPGKLHRVG (89 aa)) is the ASD1 domain. The tract at residues 181 to 200 (TAHVRSASSSQELGEEEPAR) is disordered. Disordered regions lie at residues 270–303 (SSTE…GPCK) and 349–375 (QTKP…PEDD). Residue Thr-383 is modified to Phosphothreonine. Ser-385 bears the Phosphoserine mark. Disordered regions lie at residues 420–503 (LHET…LTWG) and 566–620 (EMGE…STQA). 3 stretches are compositionally biased toward polar residues: residues 444–468 (RPTS…TDPS), 489–503 (SETP…LTWG), and 586–620 (QDLQ…STQA). The 280-residue stretch at 517-796 (EALVQELARL…QLDTIWSDLS (280 aa)) folds into the ASD2 domain.

Belongs to the shroom family. As to quaternary structure, interacts with F-actin.

It localises to the cytoplasm. Its subcellular location is the cytoskeleton. Its function is as follows. May be involved in the assembly of microtubule arrays during cell elongation. This is Protein Shroom1 (Shroom1) from Mus musculus (Mouse).